We begin with the raw amino-acid sequence, 230 residues long: Metaxin-2 homolog (230 aa).

It belongs to the metaxin family. Associates with the mitochondrial contact site and cristae organizing system (MICOS) complex (also known as MINOS or MitOS complex).

It localises to the mitochondrion outer membrane. Involved in transport of proteins into the mitochondrion. The chain is Metaxin-2 homolog (mtx-2) from Caenorhabditis elegans.